Consider the following 119-residue polypeptide: MLPSQHKLSNSEQFRATIRKGKRAGRSTVVLHFYAEATAGNLATAGGPRFGLVVSKAVGNAVTRHRVSRQLRHVVIAMKDQFPASSHVVVRALPPAATASSEELRADVQAALDKLNRKR.

This sequence belongs to the RnpA family. In terms of assembly, consists of a catalytic RNA component (M1 or rnpB) and a protein subunit.

It carries out the reaction Endonucleolytic cleavage of RNA, removing 5'-extranucleotides from tRNA precursor.. RNaseP catalyzes the removal of the 5'-leader sequence from pre-tRNA to produce the mature 5'-terminus. It can also cleave other RNA substrates such as 4.5S RNA. The protein component plays an auxiliary but essential role in vivo by binding to the 5'-leader sequence and broadening the substrate specificity of the ribozyme. In Corynebacterium diphtheriae (strain ATCC 700971 / NCTC 13129 / Biotype gravis), this protein is Ribonuclease P protein component.